A 111-amino-acid chain; its full sequence is uncharacterized protein (111 aa).

The next 2 membrane-spanning stretches (helical) occupy residues 45–65 (AFLI…LLVI) and 91–111 (LPAG…ILHI).

The protein resides in the cell membrane. This is an uncharacterized protein from Methanothermobacter thermautotrophicus (strain ATCC 29096 / DSM 1053 / JCM 10044 / NBRC 100330 / Delta H) (Methanobacterium thermoautotrophicum).